Consider the following 731-residue polypeptide: 1,4-alpha-glucan branching enzyme GlgB 2 (731 aa).

The active-site Nucleophile is the Asp-410. Catalysis depends on Glu-463, which acts as the Proton donor.

The protein belongs to the glycosyl hydrolase 13 family. GlgB subfamily. In terms of assembly, monomer.

The enzyme catalyses Transfers a segment of a (1-&gt;4)-alpha-D-glucan chain to a primary hydroxy group in a similar glucan chain.. It participates in glycan biosynthesis; glycogen biosynthesis. Its function is as follows. Catalyzes the formation of the alpha-1,6-glucosidic linkages in glycogen by scission of a 1,4-alpha-linked oligosaccharide from growing alpha-1,4-glucan chains and the subsequent attachment of the oligosaccharide to the alpha-1,6 position. This is 1,4-alpha-glucan branching enzyme GlgB 2 from Xanthomonas oryzae pv. oryzae (strain MAFF 311018).